The primary structure comprises 320 residues: Zinc finger protein-like 1 (320 aa).

Residues 1–43 (MGLCKCPKRKVTNLFCFEHRVNVCEHCLVANHAKCIVQSYLQW) form a B box-type; degenerate zinc finger. Over 1–274 (MGLCKCPKRK…KSRPASSMQR (274 aa)) the chain is Cytoplasmic. An RING-type; degenerate zinc finger spans residues 53-101 (CRLCNTLLSSKETARLVCYDLFHWSCLNDLATQQPPNTAPAGYRCPSCQ). The helical transmembrane segment at 275–295 (FLVILIIGVLGFLTLILLMSK) threads the bilayer. Residues 296 to 320 (LGRASADNDPNLDPLLNPHIHVGKE) are Lumenal-facing.

The protein belongs to the ZFPL1 family.

The protein resides in the golgi apparatus. It is found in the cis-Golgi network membrane. Functionally, required for cis-Golgi integrity and efficient ER to Golgi transport. This Xenopus laevis (African clawed frog) protein is Zinc finger protein-like 1 (zfpl1).